Consider the following 242-residue polypeptide: GDSL esterase/lipase At5g62930 (242 aa).

Residue S11 is the Nucleophile of the active site. The interval 223–242 is disordered; that stretch reads PHHSHIDGKNPSKAFEERCL.

This sequence belongs to the 'GDSL' lipolytic enzyme family.

The protein is GDSL esterase/lipase At5g62930 of Arabidopsis thaliana (Mouse-ear cress).